The chain runs to 98 residues: Integration host factor subunit beta (98 aa).

This sequence belongs to the bacterial histone-like protein family. In terms of assembly, heterodimer of an alpha and a beta chain.

Its function is as follows. This protein is one of the two subunits of integration host factor, a specific DNA-binding protein that functions in genetic recombination as well as in transcriptional and translational control. The polypeptide is Integration host factor subunit beta (Pseudomonas putida (strain GB-1)).